Reading from the N-terminus, the 491-residue chain is Keratin, type II microfibrillar, component 7C (491 aa).

Blocked amino end (Cys) is present on C1. A head region spans residues 1-109 (CGFSTVGSGF…PNAQCVKQEE (109 aa)). An IF rod domain is found at 109–420 (EKEQIKCLNN…RLLEGEEQRL (312 aa)). The interval 110–144 (KEQIKCLNNRFAAFIDKVRFLEQQNKLLETKLQFF) is coil 1A. The segment at 145–154 (QNRQCCESNL) is linker 1. The coil 1B stretch occupies residues 155–255 (EPLFEGYIET…YQEEIRVLQA (101 aa)). Residues 256–272 (NISDTSVIVKMDNSRDL) form a linker 12 region. The tract at residues 273–416 (NMDCIVAEIK…ATYRRLLEGE (144 aa)) is coil 2. Positions 417 to 491 (EQRLCEGVGA…GGGSCSLGRC (75 aa)) are tail.

The protein belongs to the intermediate filament family.

Wool microfibrillar keratin. The protein is Keratin, type II microfibrillar, component 7C of Ovis aries (Sheep).